A 270-amino-acid polypeptide reads, in one-letter code: 5'-AMP-activated protein kinase subunit beta-1 (270 aa).

Residues 1-43 form a disordered region; that stretch reads MGNTSSERAALERHGGHKTPRRDSSGGTKDGDRPKILMDSPED. Gly2 is lipidated: N-myristoyl glycine. Phosphothreonine is present on Thr4. Phosphoserine is present on residues Ser5 and Ser6. The residue at position 19 (Thr19) is a Phosphothreonine. Positions 21-36 are enriched in basic and acidic residues; the sequence is RRDSSGGTKDGDRPKI. Residues Ser24 and Ser25 each carry the phosphoserine; by autocatalysis modification. A phosphoserine mark is found at Ser40, Ser96, Ser101, and Ser108. The tract at residues 68 to 163 is glycogen-binding domain; that stretch reads EVNDKAPAQA…QVKKTDFEVF (96 aa). Thr148 carries the phosphothreonine modification. At Ser182 the chain carries Phosphoserine.

This sequence belongs to the 5'-AMP-activated protein kinase beta subunit family. In terms of assembly, AMPK is a heterotrimer of an alpha catalytic subunit (PRKAA1 or PRKAA2), a beta (PRKAB1 or PRKAB2) and a gamma non-catalytic subunits (PRKAG1, PRKAG2 or PRKAG3). Interacts with FNIP1 and FNIP2. Post-translationally, phosphorylated when associated with the catalytic subunit (PRKAA1 or PRKAA2). Phosphorylated by ULK1; leading to negatively regulate AMPK activity and suggesting the existence of a regulatory feedback loop between ULK1 and AMPK.

Functionally, non-catalytic subunit of AMP-activated protein kinase (AMPK), an energy sensor protein kinase that plays a key role in regulating cellular energy metabolism. In response to reduction of intracellular ATP levels, AMPK activates energy-producing pathways and inhibits energy-consuming processes: inhibits protein, carbohydrate and lipid biosynthesis, as well as cell growth and proliferation. AMPK acts via direct phosphorylation of metabolic enzymes, and by longer-term effects via phosphorylation of transcription regulators. Also acts as a regulator of cellular polarity by remodeling the actin cytoskeleton; probably by indirectly activating myosin. Beta non-catalytic subunit acts as a scaffold on which the AMPK complex assembles, via its C-terminus that bridges alpha (PRKAA1 or PRKAA2) and gamma subunits (PRKAG1, PRKAG2 or PRKAG3). The polypeptide is 5'-AMP-activated protein kinase subunit beta-1 (PRKAB1) (Homo sapiens (Human)).